The sequence spans 355 residues: 6-aminohexanoate-oligomer endohydrolase (355 aa).

Thr267 (nucleophile) is an active-site residue.

The protein belongs to the peptidase S58 family. In terms of assembly, heterotetramer composed of 4 alpha/beta heterodimers. In terms of processing, expressed as an inactive precursor that is cleaved autocatalytically at Asn266/Thr267 to generate an active enzyme composed of an alpha subunit and a beta subunit.

It catalyses the reaction [N-(6-aminohexanoyl)]n + H2O = [N-(6-aminohexanoyl)]n-x + [N-(6-aminohexanoyl)]x.. Its pathway is xenobiotic degradation; nylon-6 oligomer degradation. Functionally, involved in the degradation of nylon-6 oligomers. Degrades cyclic and linear oligomers of 6-aminohexanoate (Ahx) with a degree of polymerization greater than three by an endo-type mode. Cannot use Ahx cyclic dimer or the Ahx linear dimer. The chain is 6-aminohexanoate-oligomer endohydrolase from Kocuria sp. (strain KY2).